A 1485-amino-acid polypeptide reads, in one-letter code: Formin BNR1 (1485 aa).

Disordered stretches follow at residues 65 to 88 (HLPP…PTLH), 226 to 248 (HDDS…PTET), and 549 to 575 (ANTS…SFDE). Positions 110-636 (NQIPPEEIVD…HVTNESRVIG (527 aa)) constitute a GBD/FH3 domain. A compositionally biased stretch (polar residues) spans 231–248 (TSKLSIESGGSSGAPTET). Positions 553-564 (LEEDELTPELED) are enriched in acidic residues. Residues 660-734 (ARRAVAESKM…EQLQSPNNTA (75 aa)) adopt a coiled-coil conformation. Residues 746–874 (GNGTVASLKD…GFMNASAPPP (129 aa)) form a disordered region. An FH2 domain is found at 953-1368 (VVPSIRPKNK…YEIRKKILED (416 aa)). 2 coiled-coil regions span residues 1240-1312 (HNIS…GELN) and 1351-1382 (QREE…ESAE). The tract at residues 1447–1471 (LKRRMTTRKRTTDGETSPKSEQFMS) is disordered.

It belongs to the formin homology family. BNI1 subfamily. In terms of assembly, interacts with IQG1.

The protein localises to the bud neck. It is found in the cell septum. May organize microtubules by mediating spindle positioning and movement in the budding process. Required for cytokinesis and the maintenance of polarized hyphal growth. This Candida albicans (strain SC5314 / ATCC MYA-2876) (Yeast) protein is Formin BNR1 (BNR1).